The chain runs to 348 residues: Rhodopsin (348 aa).

N-acetylmethionine is present on methionine 1. Residues 1-36 (MNGTEGPNFYVPFSNATGVVRSPFEYPQYYLAEPWQ) lie on the Extracellular side of the membrane. Residues asparagine 2 and asparagine 15 are each glycosylated (N-linked (GlcNAc...) asparagine). Residues 37–61 (FSMLAAYMFLLIVLGFPINFLTLYV) traverse the membrane as a helical segment. Topologically, residues 62-73 (TVQHKKLRTPLN) are cytoplasmic. Residues 74–96 (YILLNLAVADLFMVFGGFTTTLY) traverse the membrane as a helical segment. Topologically, residues 97 to 110 (TSLHGYFVFGPTGC) are extracellular. Residues cysteine 110 and cysteine 187 are joined by a disulfide bond. A helical membrane pass occupies residues 111–133 (NAEGFFATLGGEIALWSLVVLAI). Residues 134-136 (ERY) carry the 'Ionic lock' involved in activated form stabilization motif. Topologically, residues 134–152 (ERYVVVCKPMSNFRFGENH) are cytoplasmic. Residues 153-173 (AIMGVAFTWVMALACAAPPLF) form a helical membrane-spanning segment. Residues 174-202 (GWSRYIPEGLQCSCGIDYYTLKPEVNNES) lie on the Extracellular side of the membrane. Glutamate 201 is a Zn(2+) binding site. The chain crosses the membrane as a helical span at residues 203–224 (FVIYMFVVHFTIPMIVIFFCYG). Residues 225–252 (QLVFTVKEARAQQQESATTQKAEKEVTR) are Cytoplasmic-facing. The chain crosses the membrane as a helical span at residues 253–274 (MVIIMVIAFLICWVPYASVAFY). Residues 275–286 (IFTHQGSNFGPI) are Extracellular-facing. Glutamine 279 serves as a coordination point for Zn(2+). Residues 287 to 308 (FMTIPAFFAKSASIYNPVIYIM) traverse the membrane as a helical segment. Lysine 296 is modified (N6-(retinylidene)lysine). Over 309 to 348 (MNKQFRNCMLTTICCGKNPLGDDEASATVSKTETSQVAPA) the chain is Cytoplasmic. S-palmitoyl cysteine attachment occurs at residues cysteine 322 and cysteine 323. The tract at residues 330–348 (DDEASATVSKTETSQVAPA) is interaction with SAG. Phosphoserine is present on serine 334. Phosphothreonine is present on threonine 336. Position 338 is a phosphoserine (serine 338). Residues threonine 340 and threonine 342 each carry the phosphothreonine modification. Residue serine 343 is modified to Phosphoserine.

The protein belongs to the G-protein coupled receptor 1 family. Opsin subfamily. Homodimer. May form a complex composed of RHO, GRK1 and RCVRN in a Ca(2+)-dependent manner; RCVRN prevents the interaction between GRK1 and RHO. Interacts with GRK1. Interacts (phosphorylated form) with SAG. Interacts with GNAT1. Interacts with GNAT3. SAG and G-proteins compete for a common binding site. Interacts with PRCD; the interaction promotes PRCD stability. Forms a complex with ASAP1 and ARF4. Forms a complex with ASAP1, RAB11A, Rabin8/RAB3IP, ARF4 and RAB11FIP3; the complex regulates Golgi-to-cilia rhodopsin/RHO transport in photoreceptors. In terms of processing, phosphorylated on some or all of the serine and threonine residues present in the C-terminal region. Contains one covalently linked retinal chromophore. Upon light absorption, the covalently bound 11-cis-retinal is converted to all-trans-retinal. After hydrolysis of the Schiff base and release of the covalently bound all-trans-retinal, active rhodopsin is regenerated by binding of a fresh molecule of 11-cis-retinal.

It localises to the membrane. The protein localises to the cell projection. It is found in the cilium. Its subcellular location is the photoreceptor outer segment. Functionally, photoreceptor required for image-forming vision at low light intensity. Required for photoreceptor cell viability after birth. Light-induced isomerization of 11-cis to all-trans retinal triggers a conformational change that activates signaling via G-proteins. Subsequent receptor phosphorylation mediates displacement of the bound G-protein alpha subunit by the arrestin SAG and terminates signaling. This Macaca fascicularis (Crab-eating macaque) protein is Rhodopsin (RHO).